The chain runs to 378 residues: Queuine tRNA-ribosyltransferase (378 aa).

Catalysis depends on aspartate 89, which acts as the Proton acceptor. Substrate contacts are provided by residues 89 to 93 (DSGGF), aspartate 143, glutamine 187, and glycine 214. Residues 245-251 (GVGKPED) are RNA binding. Aspartate 264 serves as the catalytic Nucleophile. The tract at residues 269–273 (TRNAR) is RNA binding; important for wobble base 34 recognition. Positions 302, 304, 307, and 333 each coordinate Zn(2+).

This sequence belongs to the queuine tRNA-ribosyltransferase family. In terms of assembly, homodimer. Within each dimer, one monomer is responsible for RNA recognition and catalysis, while the other monomer binds to the replacement base PreQ1. Zn(2+) is required as a cofactor.

The catalysed reaction is 7-aminomethyl-7-carbaguanine + guanosine(34) in tRNA = 7-aminomethyl-7-carbaguanosine(34) in tRNA + guanine. It functions in the pathway tRNA modification; tRNA-queuosine biosynthesis. Catalyzes the base-exchange of a guanine (G) residue with the queuine precursor 7-aminomethyl-7-deazaguanine (PreQ1) at position 34 (anticodon wobble position) in tRNAs with GU(N) anticodons (tRNA-Asp, -Asn, -His and -Tyr). Catalysis occurs through a double-displacement mechanism. The nucleophile active site attacks the C1' of nucleotide 34 to detach the guanine base from the RNA, forming a covalent enzyme-RNA intermediate. The proton acceptor active site deprotonates the incoming PreQ1, allowing a nucleophilic attack on the C1' of the ribose to form the product. After dissociation, two additional enzymatic reactions on the tRNA convert PreQ1 to queuine (Q), resulting in the hypermodified nucleoside queuosine (7-(((4,5-cis-dihydroxy-2-cyclopenten-1-yl)amino)methyl)-7-deazaguanosine). The sequence is that of Queuine tRNA-ribosyltransferase from Aeromonas hydrophila subsp. hydrophila (strain ATCC 7966 / DSM 30187 / BCRC 13018 / CCUG 14551 / JCM 1027 / KCTC 2358 / NCIMB 9240 / NCTC 8049).